A 459-amino-acid polypeptide reads, in one-letter code: Methionine aminopeptidase 2-1 (459 aa).

Residues 1 to 12 are compositionally biased toward basic and acidic residues; the sequence is MGSKSPEDHRQG. The tract at residues 1–79 is disordered; that stretch reads MGSKSPEDHR…RKRNKKKSKK (79 aa). Residues 43–54 show a composition bias toward acidic residues; the sequence is GQDEDGDDDDDE. Residues 67-79 are compositionally biased toward basic residues; sequence KKKRKRNKKKSKK. Position 210 (His-210) interacts with substrate. Residues Asp-231, Asp-242, and His-311 each contribute to the a divalent metal cation site. His-319 provides a ligand contact to substrate. A divalent metal cation-binding residues include Glu-344 and Glu-440.

The protein belongs to the peptidase M24A family. Methionine aminopeptidase eukaryotic type 2 subfamily. Requires Co(2+) as cofactor. Zn(2+) is required as a cofactor. It depends on Mn(2+) as a cofactor. Fe(2+) serves as cofactor.

It is found in the cytoplasm. The enzyme catalyses Release of N-terminal amino acids, preferentially methionine, from peptides and arylamides.. Cotranslationally removes the N-terminal methionine from nascent proteins. The N-terminal methionine is often cleaved when the second residue in the primary sequence is small and uncharged (Met-Ala-, Cys, Gly, Pro, Ser, Thr, or Val). The protein is Methionine aminopeptidase 2-1 of Pyrenophora tritici-repentis (strain Pt-1C-BFP) (Wheat tan spot fungus).